The sequence spans 297 residues: Putative S-adenosyl-L-methionine-dependent methyltransferase Mjls_1072 (297 aa).

S-adenosyl-L-methionine contacts are provided by residues D124 and 153–154 (DL).

This sequence belongs to the UPF0677 family.

Functionally, exhibits S-adenosyl-L-methionine-dependent methyltransferase activity. In Mycobacterium sp. (strain JLS), this protein is Putative S-adenosyl-L-methionine-dependent methyltransferase Mjls_1072.